Here is a 289-residue protein sequence, read N- to C-terminus: ATP synthase subunit a (289 aa).

The next 7 membrane-spanning stretches (helical) occupy residues 41-61 (KATA…WLGF), 101-121 (YLLV…IPAA), 129-149 (IAVP…AGIK), 166-186 (TAPL…TLIV), 189-209 (FTLA…LLVF), 222-242 (FVFG…ELVI), and 244-264 (ALQA…AMAH).

Belongs to the ATPase A chain family. F-type ATPases have 2 components, CF(1) - the catalytic core - and CF(0) - the membrane proton channel. CF(1) has five subunits: alpha(3), beta(3), gamma(1), delta(1), epsilon(1). CF(0) has three main subunits: a(1), b(2) and c(9-12). The alpha and beta chains form an alternating ring which encloses part of the gamma chain. CF(1) is attached to CF(0) by a central stalk formed by the gamma and epsilon chains, while a peripheral stalk is formed by the delta and b chains.

The protein resides in the cell membrane. Functionally, key component of the proton channel; it plays a direct role in the translocation of protons across the membrane. The protein is ATP synthase subunit a of Frankia alni (strain DSM 45986 / CECT 9034 / ACN14a).